The following is an 889-amino-acid chain: TATA box-binding protein-associated factor RNA polymerase I subunit B (889 aa).

Residues 1 to 33 form an RRN7-type zinc finger; the sequence is MAPETNEKCKACGGFNFSMIDGFKYCDRCGTLL. Residues cysteine 9, cysteine 12, cysteine 26, and cysteine 29 each coordinate Zn(2+). A B-reader region spans residues 35–101; the sequence is NFEELEAEEG…DFFSRQALKN (67 aa). A B-linker region spans residues 102–113; sequence DELAFPHESTPD. Positions 114–351 are N-terminal cyclin fold; the sequence is YLYRLGLRLA…SAKEQETKEA (238 aa). Positions 229-253 are disordered; sequence NLDLDSEEDEEEEENPNLNKSMENL. Acidic residues predominate over residues 230-243; sequence LDLDSEEDEEEEEN. The tract at residues 352–510 is C-terminal cyclin fold; it reads MTKVDYAEPY…LLVFRLTFDI (159 aa).

This sequence belongs to the RRN7/TAF1B family.

The protein localises to the nucleus. The protein resides in the nucleolus. Component of RNA polymerase I core factor complex that acts as a GTF2B/TFIIB-like factor and plays a key role in multiple steps during transcription initiation such as pre-initiation complex (PIC) assembly and postpolymerase recruitment events in polymerase I (Pol I) transcription. Binds rDNA promoters and plays a role in Pol I recruitment. The polypeptide is TATA box-binding protein-associated factor RNA polymerase I subunit B (Caenorhabditis briggsae).